A 60-amino-acid chain; its full sequence is Cytotoxin 5 (60 aa).

Disulfide bonds link C3/C21, C14/C38, C42/C53, and C54/C59.

This sequence belongs to the three-finger toxin family. Short-chain subfamily. Type IA cytotoxin sub-subfamily. In terms of assembly, monomer in solution; Homodimer and oligomer in the presence of negatively charged lipids forming a pore with a size ranging between 20 and 30 Angstroms. In terms of tissue distribution, expressed by the venom gland.

The protein resides in the secreted. Its subcellular location is the target cell membrane. Shows cytolytic activity on many different cells by forming pore in lipid membranes. In vivo, increases heart rate or kills the animal by cardiac arrest. In addition, it binds to heparin with high affinity, interacts with Kv channel-interacting protein 1 (KCNIP1) in a calcium-independent manner, and binds to integrin alpha-V/beta-3 (ITGAV/ITGB3) with moderate affinity. This Naja haje haje (Egyptian cobra) protein is Cytotoxin 5.